The sequence spans 231 residues: 2,3-bisphosphoglycerate-dependent phosphoglycerate mutase (231 aa).

Substrate is bound by residues 8–15 (RHGESEWN), 21–22 (TG), arginine 60, 87–90 (ERHY), lysine 98, 114–115 (RR), and 183–184 (GN). Residue histidine 9 is the Tele-phosphohistidine intermediate of the active site. Residue glutamate 87 is the Proton donor/acceptor of the active site.

The protein belongs to the phosphoglycerate mutase family. BPG-dependent PGAM subfamily.

The enzyme catalyses (2R)-2-phosphoglycerate = (2R)-3-phosphoglycerate. The protein operates within carbohydrate degradation; glycolysis; pyruvate from D-glyceraldehyde 3-phosphate: step 3/5. In terms of biological role, catalyzes the interconversion of 2-phosphoglycerate and 3-phosphoglycerate. In Streptococcus equi subsp. zooepidemicus (strain H70), this protein is 2,3-bisphosphoglycerate-dependent phosphoglycerate mutase.